The following is a 666-amino-acid chain: 7SK snRNA methylphosphate capping enzyme (666 aa).

Met1 is subject to N-acetylmethionine. Over residues 1–10 (MIEMAAEKEP) the composition is skewed to basic and acidic residues. Residues 1–141 (MIEMAAEKEP…GSGGSFKHPA (141 aa)) form a disordered region. A compositionally biased stretch (low complexity) spans 50 to 61 (GPGPRAHSAGAA). A Phosphoserine modification is found at Ser57. An Omega-N-methylarginine modification is found at Arg91. Phosphoserine is present on residues Ser126, Ser150, and Ser154. Thr188 is subject to Phosphothreonine. Phosphoserine is present on residues Ser191, Ser192, and Ser229. Basic residues predominate over residues 235-244 (RKRHRHRGPH). The segment at 235–291 (RKRHRHRGPHHQQQQQASGGNDSNAAVLPTDPLTPSLHGEGATQQQQNRGQNRDAPQ) is disordered. Residues 245 to 254 (HQQQQQASGG) are compositionally biased toward low complexity. A Phosphothreonine modification is found at Thr268. A phosphoserine mark is found at Ser307 and Ser321. Residues 309-337 (LPSALQGSSGSLSAPPAASVTSAPSTSSS) are compositionally biased toward low complexity. Residues 309–383 (LPSALQGSSG…HHHPLPATGF (75 aa)) form a disordered region. Over residues 338-347 (SRHRKRRRTS) the composition is skewed to basic residues. Ser368 is modified (phosphoserine). Residues Tyr399, Arg410, 428 to 430 (GCN), 451 to 452 (DI), 536 to 537 (NY), and Phe558 each bind S-adenosyl-L-methionine. The Bin3-type SAM domain occupies 408 to 663 (DVRLRVLKPE…PVYLFHKARS (256 aa)). Lys620 is covalently cross-linked (Glycyl lysine isopeptide (Lys-Gly) (interchain with G-Cter in SUMO2)).

Belongs to the methyltransferase superfamily. In terms of assembly, core component of the 7SK RNP complex, at least composed of 7SK RNA, LARP7, MEPCE, HEXIM1 (or HEXIM2) and P-TEFb (composed of CDK9 and CCNT1/cyclin-T1). Interacts with METTL16. Interacts with RBM7; upon genotoxic stress this interaction is enhanced, triggering the release of inactive P-TEFb complex from the core, yielding to P-TEFb complex activation. Dephosphorylated at Ser-126 by the PNUTS-PP1 complex, promoting RNA polymerase II transcription pause-release.

It is found in the nucleus. It carries out the reaction a 5'-end triphospho-guanosine-ribonucleotide-snRNA + S-adenosyl-L-methionine = a 5'-end methyltriphosphate-guanosine-ribonucleotide-snRNA + S-adenosyl-L-homocysteine. In terms of biological role, S-adenosyl-L-methionine-dependent methyltransferase that adds a methylphosphate cap at the 5'-end of 7SK snRNA (7SK RNA), leading to stabilize it. Also has a non-enzymatic function as part of the 7SK RNP complex: the 7SK RNP complex sequesters the positive transcription elongation factor b (P-TEFb) in a large inactive 7SK RNP complex preventing RNA polymerase II phosphorylation and subsequent transcriptional elongation. The 7SK RNP complex also promotes snRNA gene transcription by RNA polymerase II via interaction with the little elongation complex (LEC). In the 7SK RNP complex, MEPCE is required to stabilize 7SK RNA and facilitate the assembly of 7SK RNP complex. MEPCE has a non-enzymatic function in the 7SK RNP complex; it has a non-enzymatic function; interaction with LARP7 within the 7SK RNP complex occluding its catalytic center. Also required for stability of U6 snRNAs. The polypeptide is 7SK snRNA methylphosphate capping enzyme (Mus musculus (Mouse)).